A 232-amino-acid chain; its full sequence is 2-C-methyl-D-erythritol 4-phosphate cytidylyltransferase (232 aa).

It belongs to the IspD/TarI cytidylyltransferase family. IspD subfamily.

The enzyme catalyses 2-C-methyl-D-erythritol 4-phosphate + CTP + H(+) = 4-CDP-2-C-methyl-D-erythritol + diphosphate. It participates in isoprenoid biosynthesis; isopentenyl diphosphate biosynthesis via DXP pathway; isopentenyl diphosphate from 1-deoxy-D-xylulose 5-phosphate: step 2/6. In terms of biological role, catalyzes the formation of 4-diphosphocytidyl-2-C-methyl-D-erythritol from CTP and 2-C-methyl-D-erythritol 4-phosphate (MEP). The chain is 2-C-methyl-D-erythritol 4-phosphate cytidylyltransferase from Bacillus velezensis (strain DSM 23117 / BGSC 10A6 / LMG 26770 / FZB42) (Bacillus amyloliquefaciens subsp. plantarum).